Consider the following 172-residue polypeptide: Peptide deformylase-like (172 aa).

Residue glutamate 134 is part of the active site.

Belongs to the polypeptide deformylase family.

The protein is Peptide deformylase-like of Rhizobium meliloti (strain 1021) (Ensifer meliloti).